Here is a 416-residue protein sequence, read N- to C-terminus: WD repeat-containing protein JIP5 (416 aa).

WD repeat units lie at residues Pro9 to Lys48, Arg62 to Lys101, and Gly112 to Ser151. The segment at Glu149–Lys183 is disordered. Residues Ser166–Ser179 show a composition bias toward low complexity. WD repeat units lie at residues Ile214–Glu255, Asp264–Leu308, and Ser309–Asn348. Composition is skewed to acidic residues over residues Ser343 to Asn359 and Ser374 to Asp383. A disordered region spans residues Ser343–Asp416. Over residues Lys389–Gly400 the composition is skewed to basic residues.

The protein belongs to the WD repeat WDR55 family.

Its subcellular location is the nucleus. It localises to the nucleolus. This chain is WD repeat-containing protein JIP5 (JIP5), found in Coccidioides immitis (strain RS) (Valley fever fungus).